We begin with the raw amino-acid sequence, 356 residues long: MAYKLLIINPGSTSTKIGVYEGEKEVLEETLRHSAEEILKYATIFDQLDFRKEVILKVLKEKGIDINELDAVVGRGGMLKPIEGGTYEVNEAMVEDLKIGVQGPHASNLGGILSNEIAKEIGKRAFIVDPVVVDEMEDVARLSGVPELPRKSKFHALNQKAVAKRYAKEHNTSYEDVNLIVVHMGGGVSVGAHRKGRVIDVNNALDGDGPFSPERAGGVPSGELLEMCFSGKYSKEEVYKKLVGKGGFVAYANTNDARDLIKLSQEGDEKGSLIFNAFIYQIAKEIGSMAVVLDGEVDAIVLTGGIAYSDYVTNAINKKVKWIAPMVVYGGEDELLALAQGAIRVLDGVEEAKIYK.

It belongs to the acetokinase family.

The protein localises to the cytoplasm. The enzyme catalyses butanoate + ATP = butanoyl phosphate + ADP. It functions in the pathway lipid metabolism; butanoate metabolism. Catalyzes the conversion of butyryl-CoA through butyryl phosphate to butyrate. The sequence is that of Butyrate kinase (buk) from Clostridium perfringens (strain 13 / Type A).